Consider the following 589-residue polypeptide: Protein drl-1 (589 aa).

Positions 1 to 51 (MHSEEKYLHIPNNTKYPEIIVEEEEEDPSEEERSELSETDDVATPLRPSDT) are disordered. Over residues 20-41 (IVEEEEEDPSEEERSELSETDD) the composition is skewed to acidic residues. Residues 97 to 373 (WRINEDVMKD…QNLLESHGSK (277 aa)) form the Protein kinase domain. Transmembrane regions (helical) follow at residues 429–449 (GFIP…VLLV), 456–476 (LCAA…IFLI), and 491–511 (GFVV…TTLC).

Belongs to the protein kinase superfamily. STE Ser/Thr protein kinase family. In terms of tissue distribution, expressed in vulval and body wall muscles, hypodermis, seam cells and tissues next to pharynx and anus.

It is found in the membrane. Its function is as follows. Negatively regulates lifespan and health span probably by participating in nutrient sensing. The sequence is that of Protein drl-1 from Caenorhabditis elegans.